Here is a 278-residue protein sequence, read N- to C-terminus: Phosphatidylglycerol--prolipoprotein diacylglyceryl transferase (278 aa).

Helical transmembrane passes span 21 to 41 (WYGI…QASV), 54 to 74 (IIFW…VIFQ), and 88 to 108 (IWHG…TGII). An a 1,2-diacyl-sn-glycero-3-phospho-(1'-sn-glycerol)-binding site is contributed by arginine 136. A run of 2 helical transmembrane segments spans residues 176-196 (QPTF…LILL) and 234-254 (IRVA…IMII).

The protein belongs to the Lgt family.

It is found in the cell membrane. The enzyme catalyses L-cysteinyl-[prolipoprotein] + a 1,2-diacyl-sn-glycero-3-phospho-(1'-sn-glycerol) = an S-1,2-diacyl-sn-glyceryl-L-cysteinyl-[prolipoprotein] + sn-glycerol 1-phosphate + H(+). It functions in the pathway protein modification; lipoprotein biosynthesis (diacylglyceryl transfer). Functionally, catalyzes the transfer of the diacylglyceryl group from phosphatidylglycerol to the sulfhydryl group of the N-terminal cysteine of a prolipoprotein, the first step in the formation of mature lipoproteins. This is Phosphatidylglycerol--prolipoprotein diacylglyceryl transferase from Staphylococcus xylosus.